Here is a 381-residue protein sequence, read N- to C-terminus: Transcription termination factor 4, mitochondrial (381 aa).

Residues 1-42 (MAAFGRQVLDWHRLIPLTWACMARQTPHLGEQRRTTASLLRK) constitute a mitochondrion transit peptide. MTERF repeat units lie at residues 142–172 (CVVL…LGLG), 177–204 (KRVL…LKEK), 209–239 (VQQV…YAYF), 245–270 (HPDI…YLER), and 290–318 (LKDI…VFKK). Residues 310–327 (VEEFQVFKKLLAREEEES) form a dimerization with NSUN4 region. Positions 322–381 (REEEESESSTSDDKRASLDEDEDDDDEEDNDEDDNDEDDDDEDDDEAEDNDEDEDDDEEE) are disordered. Positions 340 to 381 (DEDEDDDDEEDNDEDDNDEDDDDEDDDEAEDNDEDEDDDEEE) are enriched in acidic residues.

It belongs to the mTERF family. As to quaternary structure, heterodimer with NSUN4; this interaction may be required for NSUN4 recruitment to the mitochondrial large ribosomal subunit. Post-translationally, the mature mitochondrial protein exists in 2 forms differing at the level of their N-terminus, one is starting at residue 43 and the other at residue 48.

It is found in the mitochondrion. Its function is as follows. Regulator of mitochondrial ribosome biogenesis and translation. Binds to mitochondrial ribosomal RNAs 16S, 12S and 7S and targets NSUN4 RNA methyltransferase to the mitochondrial large ribosomal subunit (39S). This chain is Transcription termination factor 4, mitochondrial (MTERF4), found in Homo sapiens (Human).